The sequence spans 491 residues: Aspartyl/glutamyl-tRNA(Asn/Gln) amidotransferase subunit B (491 aa).

Belongs to the GatB/GatE family. GatB subfamily. Heterotrimer of A, B and C subunits.

The enzyme catalyses L-glutamyl-tRNA(Gln) + L-glutamine + ATP + H2O = L-glutaminyl-tRNA(Gln) + L-glutamate + ADP + phosphate + H(+). It carries out the reaction L-aspartyl-tRNA(Asn) + L-glutamine + ATP + H2O = L-asparaginyl-tRNA(Asn) + L-glutamate + ADP + phosphate + 2 H(+). Functionally, allows the formation of correctly charged Asn-tRNA(Asn) or Gln-tRNA(Gln) through the transamidation of misacylated Asp-tRNA(Asn) or Glu-tRNA(Gln) in organisms which lack either or both of asparaginyl-tRNA or glutaminyl-tRNA synthetases. The reaction takes place in the presence of glutamine and ATP through an activated phospho-Asp-tRNA(Asn) or phospho-Glu-tRNA(Gln). The sequence is that of Aspartyl/glutamyl-tRNA(Asn/Gln) amidotransferase subunit B from Prochlorococcus marinus (strain NATL2A).